Here is a 316-residue protein sequence, read N- to C-terminus: Ribosomal RNA small subunit methyltransferase H (316 aa).

S-adenosyl-L-methionine contacts are provided by residues 35–37 (GGH), Asp55, Phe79, Asp101, and Gln108.

Belongs to the methyltransferase superfamily. RsmH family.

The protein resides in the cytoplasm. The enzyme catalyses cytidine(1402) in 16S rRNA + S-adenosyl-L-methionine = N(4)-methylcytidine(1402) in 16S rRNA + S-adenosyl-L-homocysteine + H(+). Functionally, specifically methylates the N4 position of cytidine in position 1402 (C1402) of 16S rRNA. The polypeptide is Ribosomal RNA small subunit methyltransferase H (Vibrio parahaemolyticus serotype O3:K6 (strain RIMD 2210633)).